The sequence spans 614 residues: Dihydroxy-acid dehydratase 1 (614 aa).

Residue D81 coordinates Mg(2+). C122 lines the [2Fe-2S] cluster pocket. Residues D123 and K124 each coordinate Mg(2+). The residue at position 124 (K124) is an N6-carboxylysine. Position 195 (C195) interacts with [2Fe-2S] cluster. E491 contributes to the Mg(2+) binding site. Catalysis depends on S517, which acts as the Proton acceptor.

Belongs to the IlvD/Edd family. Homodimer. [2Fe-2S] cluster serves as cofactor. It depends on Mg(2+) as a cofactor.

The enzyme catalyses (2R)-2,3-dihydroxy-3-methylbutanoate = 3-methyl-2-oxobutanoate + H2O. The catalysed reaction is (2R,3R)-2,3-dihydroxy-3-methylpentanoate = (S)-3-methyl-2-oxopentanoate + H2O. Its pathway is amino-acid biosynthesis; L-isoleucine biosynthesis; L-isoleucine from 2-oxobutanoate: step 3/4. It participates in amino-acid biosynthesis; L-valine biosynthesis; L-valine from pyruvate: step 3/4. In terms of biological role, functions in the biosynthesis of branched-chain amino acids. Catalyzes the dehydration of (2R,3R)-2,3-dihydroxy-3-methylpentanoate (2,3-dihydroxy-3-methylvalerate) into 2-oxo-3-methylpentanoate (2-oxo-3-methylvalerate) and of (2R)-2,3-dihydroxy-3-methylbutanoate (2,3-dihydroxyisovalerate) into 2-oxo-3-methylbutanoate (2-oxoisovalerate), the penultimate precursor to L-isoleucine and L-valine, respectively. In Mesorhizobium japonicum (strain LMG 29417 / CECT 9101 / MAFF 303099) (Mesorhizobium loti (strain MAFF 303099)), this protein is Dihydroxy-acid dehydratase 1.